A 480-amino-acid polypeptide reads, in one-letter code: NADH-quinone oxidoreductase subunit N (480 aa).

13 consecutive transmembrane segments (helical) span residues 11–31 (VIPE…DLFV), 38–58 (ITYG…IALA), 74–94 (GLSD…FLYS), 109–129 (YVLG…YSFL), 163–183 (FILG…LYGI), 200–220 (GAGL…GLAF), 239–259 (PTSV…AIIM), 273–293 (WQGM…VVAI), 301–321 (MLAY…LAGT), 329–349 (LFYT…IILL), 372–392 (FAFI…TVGF), 405–425 (VEMI…AFYY), and 451–471 (VVLS…GLLM).

Belongs to the complex I subunit 2 family. NDH-1 is composed of 14 different subunits. Subunits NuoA, H, J, K, L, M, N constitute the membrane sector of the complex.

Its subcellular location is the cell inner membrane. The enzyme catalyses a quinone + NADH + 5 H(+)(in) = a quinol + NAD(+) + 4 H(+)(out). In terms of biological role, NDH-1 shuttles electrons from NADH, via FMN and iron-sulfur (Fe-S) centers, to quinones in the respiratory chain. The immediate electron acceptor for the enzyme in this species is believed to be ubiquinone. Couples the redox reaction to proton translocation (for every two electrons transferred, four hydrogen ions are translocated across the cytoplasmic membrane), and thus conserves the redox energy in a proton gradient. The chain is NADH-quinone oxidoreductase subunit N from Thioalkalivibrio sulfidiphilus (strain HL-EbGR7).